A 283-amino-acid chain; its full sequence is SNAP25 homologous protein SNAP32 (283 aa).

Disordered stretches follow at residues M1–R64 and L192–S212. Positions P198 to S212 are enriched in polar residues. Residues E218–L280 enclose the t-SNARE coiled-coil homology domain.

It belongs to the SNAP-25 family. In terms of assembly, interacts with SYP121. As to expression, expressed in roots, culms and leaves.

The protein localises to the membrane. In terms of biological role, t-SNARE involved in diverse vesicle trafficking and membrane fusion processes. May be involved in resistance to the rice blast fungus Magnaporthe oryzae. May contribute to host resistance to rice blast through interaction with SYP121. The chain is SNAP25 homologous protein SNAP32 from Oryza sativa subsp. japonica (Rice).